Here is a 212-residue protein sequence, read N- to C-terminus: Glycerol-3-phosphate acyltransferase (212 aa).

Transmembrane regions (helical) follow at residues 6–26 (IAVL…GLIL), 56–76 (LAAL…LLAH), 92–112 (LTLI…WLGF), 122–142 (LGVS…AWLL), 150–170 (SSVG…FMPA), and 171–191 (SHEI…LLLW).

This sequence belongs to the PlsY family. In terms of assembly, probably interacts with PlsX.

Its subcellular location is the cell inner membrane. The catalysed reaction is an acyl phosphate + sn-glycerol 3-phosphate = a 1-acyl-sn-glycero-3-phosphate + phosphate. Its pathway is lipid metabolism; phospholipid metabolism. Its function is as follows. Catalyzes the transfer of an acyl group from acyl-phosphate (acyl-PO(4)) to glycerol-3-phosphate (G3P) to form lysophosphatidic acid (LPA). This enzyme utilizes acyl-phosphate as fatty acyl donor, but not acyl-CoA or acyl-ACP. The protein is Glycerol-3-phosphate acyltransferase of Zymomonas mobilis subsp. mobilis (strain ATCC 31821 / ZM4 / CP4).